Consider the following 343-residue polypeptide: Phosphatidylglycerol--prolipoprotein diacylglyceryl transferase 1 (343 aa).

4 consecutive transmembrane segments (helical) span residues V19 to G39, A54 to I74, I93 to I113, and G119 to I139. R141 provides a ligand contact to a 1,2-diacyl-sn-glycero-3-phospho-(1'-sn-glycerol). The next 3 membrane-spanning stretches (helical) occupy residues H176–A196, L202–Y224, and L238–A258. The segment at E269 to G343 is disordered. Over residues A283–A293 the composition is skewed to basic and acidic residues. Acidic residues predominate over residues A314 to A324.

It belongs to the Lgt family.

It is found in the cell membrane. It carries out the reaction L-cysteinyl-[prolipoprotein] + a 1,2-diacyl-sn-glycero-3-phospho-(1'-sn-glycerol) = an S-1,2-diacyl-sn-glyceryl-L-cysteinyl-[prolipoprotein] + sn-glycerol 1-phosphate + H(+). It participates in protein modification; lipoprotein biosynthesis (diacylglyceryl transfer). Catalyzes the transfer of the diacylglyceryl group from phosphatidylglycerol to the sulfhydryl group of the N-terminal cysteine of a prolipoprotein, the first step in the formation of mature lipoproteins. In Streptomyces coelicolor (strain ATCC BAA-471 / A3(2) / M145), this protein is Phosphatidylglycerol--prolipoprotein diacylglyceryl transferase 1.